A 205-amino-acid polypeptide reads, in one-letter code: High frequency lysogenization protein HflD homolog (205 aa).

The protein belongs to the HflD family.

The protein localises to the cytoplasm. It is found in the cell inner membrane. The protein is High frequency lysogenization protein HflD homolog of Shewanella pealeana (strain ATCC 700345 / ANG-SQ1).